We begin with the raw amino-acid sequence, 308 residues long: Protein translocase subunit SecF (308 aa).

Transmembrane regions (helical) follow at residues 22–42 (AVSYSFSIILSLISFIWIGIY), 140–160 (IEAGAMAMLSSFLAIMVYIWV), 164–184 (WYFGLGILIALVHDVILALGF), 194–214 (LSTIAAVLTIIGYSVNDSVVI), 246–266 (ILTVITTLLANLALMLFGGEA), and 272–292 (VLVFFGIIAGTYSSIFISAPI).

Belongs to the SecD/SecF family. SecF subfamily. In terms of assembly, forms a complex with SecD. Part of the essential Sec protein translocation apparatus which comprises SecA, SecYEG and auxiliary proteins SecDF-YajC and YidC.

The protein resides in the cell inner membrane. Part of the Sec protein translocase complex. Interacts with the SecYEG preprotein conducting channel. SecDF uses the proton motive force (PMF) to complete protein translocation after the ATP-dependent function of SecA. This Rickettsia akari (strain Hartford) protein is Protein translocase subunit SecF.